A 94-amino-acid polypeptide reads, in one-letter code: MTLNNLQLFAHKKGGGSTSNGRDSQAKRLGAKAADGQTVTGGSILYRQRGTHIYPGVNVGRGGDDTLFAKVEGVVRFERKGRDKKQVSVYPIAK.

Residues 1-9 (MTLNNLQLF) constitute a propeptide that is removed on maturation. Residues 9-33 (FAHKKGGGSTSNGRDSQAKRLGAKA) are disordered.

It belongs to the bacterial ribosomal protein bL27 family. Post-translationally, the N-terminus is cleaved by ribosomal processing cysteine protease Prp.

The sequence is that of Large ribosomal subunit protein bL27 from Streptococcus pneumoniae serotype 4 (strain ATCC BAA-334 / TIGR4).